Reading from the N-terminus, the 165-residue chain is (2E)-enoyl-[ACP] glycyltransferase (165 aa).

Belongs to the FcoT family.

The catalysed reaction is a (3R)-3-[(carboxymethyl)amino]fatty acid + holo-[ACP] + H(+) = a (2E)-enoyl-[ACP] + glycine + H2O. The enzyme catalyses (3R)-3-[(carboxymethyl)amino]butanoate + holo-[ACP] + H(+) = (2E)-butenoyl-[ACP] + glycine + H2O. Functionally, involved in the biosynthesis of a unique class of isonitrile lipopeptides (INLPs). Catalyzes a Michael addition of glycine to the beta-position of an alpha,beta-unsaturated fatty acyl-[ACP], producing a (3R)-3-[(carboxymethyl)amino]fatty acid. Acts on the (2E)-butenoyl moiety loaded on the acyl-carrier protein ScoB, forming the product (3R)-3-[(carboxymethyl)amino]butanoate released from ScoB. The chain is (2E)-enoyl-[ACP] glycyltransferase from Streptomyces coeruleorubidus.